A 57-amino-acid polypeptide reads, in one-letter code: Large ribosomal subunit protein bL32 (57 aa).

A disordered region spans residues 1-37 (MAVQQNKPTRSKRGMRRSHDALTAVTSLSVDKTSGEK).

It belongs to the bacterial ribosomal protein bL32 family.

In Escherichia fergusonii (strain ATCC 35469 / DSM 13698 / CCUG 18766 / IAM 14443 / JCM 21226 / LMG 7866 / NBRC 102419 / NCTC 12128 / CDC 0568-73), this protein is Large ribosomal subunit protein bL32.